A 218-amino-acid polypeptide reads, in one-letter code: 3-dehydroquinate dehydratase (218 aa).

Residues 29 to 31 (EFR) and Arg-56 contribute to the 3-dehydroquinate site. The active-site Proton donor/acceptor is the His-116. Lys-142 serves as the catalytic Schiff-base intermediate with substrate. 3-dehydroquinate-binding residues include Arg-180, Ser-200, and Gln-204.

The protein belongs to the type-I 3-dehydroquinase family. In terms of assembly, homodimer.

The enzyme catalyses 3-dehydroquinate = 3-dehydroshikimate + H2O. It functions in the pathway metabolic intermediate biosynthesis; chorismate biosynthesis; chorismate from D-erythrose 4-phosphate and phosphoenolpyruvate: step 3/7. In terms of biological role, involved in the third step of the chorismate pathway, which leads to the biosynthesis of aromatic amino acids. Catalyzes the cis-dehydration of 3-dehydroquinate (DHQ) and introduces the first double bond of the aromatic ring to yield 3-dehydroshikimate. This chain is 3-dehydroquinate dehydratase, found in Methanococcus maripaludis (strain DSM 14266 / JCM 13030 / NBRC 101832 / S2 / LL).